The chain runs to 361 residues: Chorismate synthase (361 aa).

Residues R48 and R54 each contribute to the NADP(+) site. Residues 125-127 (RSS), 238-239 (NA), G278, 293-297 (KPTSS), and R319 contribute to the FMN site.

Belongs to the chorismate synthase family. As to quaternary structure, homotetramer. It depends on FMNH2 as a cofactor.

It carries out the reaction 5-O-(1-carboxyvinyl)-3-phosphoshikimate = chorismate + phosphate. Its pathway is metabolic intermediate biosynthesis; chorismate biosynthesis; chorismate from D-erythrose 4-phosphate and phosphoenolpyruvate: step 7/7. Functionally, catalyzes the anti-1,4-elimination of the C-3 phosphate and the C-6 proR hydrogen from 5-enolpyruvylshikimate-3-phosphate (EPSP) to yield chorismate, which is the branch point compound that serves as the starting substrate for the three terminal pathways of aromatic amino acid biosynthesis. This reaction introduces a second double bond into the aromatic ring system. The sequence is that of Chorismate synthase from Proteus mirabilis (strain HI4320).